The following is a 332-amino-acid chain: Tetraacyldisaccharide 4'-kinase (332 aa).

Residue 52–59 (TLGGAGKT) participates in ATP binding.

This sequence belongs to the LpxK family.

The catalysed reaction is a lipid A disaccharide + ATP = a lipid IVA + ADP + H(+). Its pathway is glycolipid biosynthesis; lipid IV(A) biosynthesis; lipid IV(A) from (3R)-3-hydroxytetradecanoyl-[acyl-carrier-protein] and UDP-N-acetyl-alpha-D-glucosamine: step 6/6. In terms of biological role, transfers the gamma-phosphate of ATP to the 4'-position of a tetraacyldisaccharide 1-phosphate intermediate (termed DS-1-P) to form tetraacyldisaccharide 1,4'-bis-phosphate (lipid IVA). This Methylobacterium sp. (strain 4-46) protein is Tetraacyldisaccharide 4'-kinase.